Consider the following 48-residue polypeptide: Large ribosomal subunit protein eL40 (48 aa).

It belongs to the eukaryotic ribosomal protein eL40 family.

The chain is Large ribosomal subunit protein eL40 from Methanoregula boonei (strain DSM 21154 / JCM 14090 / 6A8).